The following is a 46-amino-acid chain: Daisho2 (46 aa).

The signal sequence occupies residues 1 to 22; the sequence is MNCLKICGFFFALIAALATAEA.

In terms of tissue distribution, hemolymph (at protein level).

It is found in the secreted. Its function is as follows. Peptide which plays a role in the humoral immune response to a subset of filamentous fungi, including F.oxysporum and F.verticillioides. The sequence is that of Daisho2 from Drosophila melanogaster (Fruit fly).